A 447-amino-acid polypeptide reads, in one-letter code: Na(+)-translocating NADH-quinone reductase subunit A (447 aa).

This sequence belongs to the NqrA family. In terms of assembly, composed of six subunits; NqrA, NqrB, NqrC, NqrD, NqrE and NqrF.

It carries out the reaction a ubiquinone + n Na(+)(in) + NADH + H(+) = a ubiquinol + n Na(+)(out) + NAD(+). Its function is as follows. NQR complex catalyzes the reduction of ubiquinone-1 to ubiquinol by two successive reactions, coupled with the transport of Na(+) ions from the cytoplasm to the periplasm. NqrA to NqrE are probably involved in the second step, the conversion of ubisemiquinone to ubiquinol. The chain is Na(+)-translocating NADH-quinone reductase subunit A from Haemophilus influenzae (strain PittGG).